Here is a 511-residue protein sequence, read N- to C-terminus: ATP synthase subunit alpha (511 aa).

169–176 (GDRQTGKT) serves as a coordination point for ATP.

This sequence belongs to the ATPase alpha/beta chains family. F-type ATPases have 2 components, CF(1) - the catalytic core - and CF(0) - the membrane proton channel. CF(1) has five subunits: alpha(3), beta(3), gamma(1), delta(1), epsilon(1). CF(0) has three main subunits: a(1), b(2) and c(9-12). The alpha and beta chains form an alternating ring which encloses part of the gamma chain. CF(1) is attached to CF(0) by a central stalk formed by the gamma and epsilon chains, while a peripheral stalk is formed by the delta and b chains.

The protein localises to the cell inner membrane. The enzyme catalyses ATP + H2O + 4 H(+)(in) = ADP + phosphate + 5 H(+)(out). Its function is as follows. Produces ATP from ADP in the presence of a proton gradient across the membrane. The alpha chain is a regulatory subunit. This Janthinobacterium sp. (strain Marseille) (Minibacterium massiliensis) protein is ATP synthase subunit alpha.